Consider the following 177-residue polypeptide: Large ribosomal subunit protein uL6 (177 aa).

It belongs to the universal ribosomal protein uL6 family. As to quaternary structure, part of the 50S ribosomal subunit.

Functionally, this protein binds to the 23S rRNA, and is important in its secondary structure. It is located near the subunit interface in the base of the L7/L12 stalk, and near the tRNA binding site of the peptidyltransferase center. This chain is Large ribosomal subunit protein uL6, found in Rickettsia africae (strain ESF-5).